Consider the following 335-residue polypeptide: Ubiquinol oxidase 1b, mitochondrial (335 aa).

The transit peptide at 1–47 (MSSRMAGATLLRHLGPRLFAAEPVYSGLAASARGVMPAAARIFPARM) directs the protein to the mitochondrion. The chain crosses the membrane as a helical span at residues 160–180 (ALLLETVAGVPGMVGGMLLHL). Fe cation contacts are provided by Glu-164, Glu-203, and His-206. A helical membrane pass occupies residues 222 to 242 (ALVLAAQGVFFNAYFVGYLVS). 3 residues coordinate Fe cation: Glu-254, Glu-305, and His-308.

This sequence belongs to the alternative oxidase family. It depends on Fe cation as a cofactor.

It localises to the mitochondrion inner membrane. The catalysed reaction is 2 a ubiquinol + O2 = 2 a ubiquinone + 2 H2O. Its function is as follows. Catalyzes the cyanide-resistant oxidation of ubiquinol and the reduction of molecular oxygen to water, but does not translocate protons and consequently is not linked to oxidative phosphorylation. May increase respiration when the cytochrome respiratory pathway is restricted, or in response to low temperatures. This chain is Ubiquinol oxidase 1b, mitochondrial, found in Oryza sativa subsp. japonica (Rice).